The primary structure comprises 145 residues: UPF0299 membrane protein plu1549 (145 aa).

4 helical membrane passes run 6 to 26, 34 to 54, 65 to 85, and 95 to 115; these read VLIV…CLLT, LPII…LLAF, GCSL…VGVM, and IIPI…IVAY.

The protein belongs to the UPF0299 family.

The protein resides in the cell inner membrane. In Photorhabdus laumondii subsp. laumondii (strain DSM 15139 / CIP 105565 / TT01) (Photorhabdus luminescens subsp. laumondii), this protein is UPF0299 membrane protein plu1549.